We begin with the raw amino-acid sequence, 128 residues long: ADA histone acetyltransferase complex component 2 (128 aa).

It localises to the cytoplasm. Its subcellular location is the nucleus. The polypeptide is ADA histone acetyltransferase complex component 2 (AHC2) (Saccharomyces cerevisiae (strain ATCC 204508 / S288c) (Baker's yeast)).